A 326-amino-acid polypeptide reads, in one-letter code: Vomeronasal type-1 receptor 94 (326 aa).

At 1–32 (MSEILLFSPQPLFSYTMNKYSRLYTNSNIRNT) the chain is on the extracellular side. Residues 33–53 (FFSEIGIGIAANSLLLLFHIF) form a helical membrane-spanning segment. Over 54–65 (KFIRGQRSRLTD) the chain is Cytoplasmic. A helical transmembrane segment spans residues 66–86 (LPIGLLSLIHLLKLLMIAFIA). Residues 87 to 110 (TDIFISWRGWDDIICKFLVYLYRS) are Extracellular-facing. The cysteines at positions 101 and 188 are disulfide-linked. A helical membrane pass occupies residues 111–130 (FRGLSLCTTCMLSVLQAITL). Topologically, residues 131 to 150 (SPRSSCLAKFKHKSPHHVSC) are cytoplasmic. A helical membrane pass occupies residues 151–171 (AILSLSVLYMFISSHLLVSLI). Residues 172-203 (ATPNLTTNVFMYVSESCSILPMSYLMQSMFST) lie on the Extracellular side of the membrane. N-linked (GlcNAc...) asparagine glycosylation occurs at Asn-175. The helical transmembrane segment at 204–224 (LLAIRDVFLISLMVLSTCYMV) threads the bilayer. Topologically, residues 225–254 (ALLCRHRKQTRHLQGTSLSPKASPEKKATH) are cytoplasmic. Residues 255–275 (SILMLMSFFVLMSILDSIVSC) traverse the membrane as a helical segment. Topologically, residues 276–285 (SRTMFLYDPT) are extracellular. A helical transmembrane segment spans residues 286-306 (SYAIQIFVSHIYATVSPFVFM). Over 307–326 (SNEKHIVNFLRSLCKRVINV) the chain is Cytoplasmic.

Belongs to the G-protein coupled receptor 1 family.

The protein localises to the cell membrane. Its function is as follows. Putative pheromone receptor implicated in the regulation of social as well as reproductive behavior. The sequence is that of Vomeronasal type-1 receptor 94 (Vom1r94) from Rattus norvegicus (Rat).